We begin with the raw amino-acid sequence, 141 residues long: Large ribosomal subunit protein uL11 (141 aa).

This sequence belongs to the universal ribosomal protein uL11 family. Part of the ribosomal stalk of the 50S ribosomal subunit. Interacts with L10 and the large rRNA to form the base of the stalk. L10 forms an elongated spine to which L12 dimers bind in a sequential fashion forming a multimeric L10(L12)X complex. In terms of processing, one or more lysine residues are methylated.

In terms of biological role, forms part of the ribosomal stalk which helps the ribosome interact with GTP-bound translation factors. The polypeptide is Large ribosomal subunit protein uL11 (Exiguobacterium sp. (strain ATCC BAA-1283 / AT1b)).